Consider the following 381-residue polypeptide: S-adenosylmethionine synthase (381 aa).

Histidine 15 is an ATP binding site. Aspartate 17 is a Mg(2+) binding site. Glutamate 43 contacts K(+). Positions 56 and 99 each coordinate L-methionine. The flexible loop stretch occupies residues 99–109 (QSLDIAQGVDN). ATP-binding positions include 164-166 (DGK), 230-231 (RF), aspartate 239, 245-246 (RK), and lysine 266. Aspartate 239 contacts L-methionine. Lysine 270 contributes to the L-methionine binding site.

This sequence belongs to the AdoMet synthase family. As to quaternary structure, homotetramer; dimer of dimers. Mg(2+) is required as a cofactor. K(+) serves as cofactor.

It localises to the cytoplasm. The catalysed reaction is L-methionine + ATP + H2O = S-adenosyl-L-methionine + phosphate + diphosphate. It functions in the pathway amino-acid biosynthesis; S-adenosyl-L-methionine biosynthesis; S-adenosyl-L-methionine from L-methionine: step 1/1. In terms of biological role, catalyzes the formation of S-adenosylmethionine (AdoMet) from methionine and ATP. The overall synthetic reaction is composed of two sequential steps, AdoMet formation and the subsequent tripolyphosphate hydrolysis which occurs prior to release of AdoMet from the enzyme. This is S-adenosylmethionine synthase from Legionella jeonii.